We begin with the raw amino-acid sequence, 158 residues long: NAD(P)H-quinone oxidoreductase subunit J, chloroplastic (158 aa).

The protein belongs to the complex I 30 kDa subunit family. In terms of assembly, NDH is composed of at least 16 different subunits, 5 of which are encoded in the nucleus.

It localises to the plastid. The protein localises to the chloroplast thylakoid membrane. The catalysed reaction is a plastoquinone + NADH + (n+1) H(+)(in) = a plastoquinol + NAD(+) + n H(+)(out). It catalyses the reaction a plastoquinone + NADPH + (n+1) H(+)(in) = a plastoquinol + NADP(+) + n H(+)(out). NDH shuttles electrons from NAD(P)H:plastoquinone, via FMN and iron-sulfur (Fe-S) centers, to quinones in the photosynthetic chain and possibly in a chloroplast respiratory chain. The immediate electron acceptor for the enzyme in this species is believed to be plastoquinone. Couples the redox reaction to proton translocation, and thus conserves the redox energy in a proton gradient. The polypeptide is NAD(P)H-quinone oxidoreductase subunit J, chloroplastic (Gossypium barbadense (Sea Island cotton)).